The primary structure comprises 71 residues: uncharacterized protein (71 aa).

The Sm domain maps to 15-71 (PNFEYARRLNGKKVKIFLRNGEVLDAEVTGVSNYEIMVKVGDRNLLVFKHAIDYIEY).

This is an uncharacterized protein from Methanocaldococcus jannaschii (strain ATCC 43067 / DSM 2661 / JAL-1 / JCM 10045 / NBRC 100440) (Methanococcus jannaschii).